Here is a 678-residue protein sequence, read N- to C-terminus: uncharacterized protein (678 aa).

8 helical membrane-spanning segments follow: residues 228–250 (FFVI…FSFL), 263–285 (LAMW…VATQ), 300–322 (STGA…LSCV), 334–356 (MLHN…AVLF), 361–380 (FSLS…FFSA), 387–405 (RIML…YAYL), 420–439 (NVFF…TLFF), and 455–477 (NLLL…SVSL). The interval 653–678 (PSSQGVHATPEKNACIRDETVPNLQE) is disordered.

The protein localises to the cell membrane. This is an uncharacterized protein from Treponema pallidum (strain Nichols).